A 427-amino-acid chain; its full sequence is DNA topoisomerase 6 subunit A (427 aa).

Positions 76–209 constitute a Topo IIA-type catalytic domain; the sequence is LSLSSVQTEI…LNVIAAEKGV (134 aa). Tyr170 (O-(5'-phospho-DNA)-tyrosine intermediate) is an active-site residue. Glu256 and Asp308 together coordinate Mg(2+).

Belongs to the TOP6A family. Homodimer. Heterotetramer of two TOP6A and two TOP6B subunits. Interacts with BIN4 and RHL1. The cofactor is Mg(2+). Highly expressed in leaves, stems, flowers and seedlings.

It localises to the nucleus. It carries out the reaction ATP-dependent breakage, passage and rejoining of double-stranded DNA.. Its function is as follows. Component of the DNA topoisomerase VI involved in chromatin organization and progression of endoreduplication cycles. Relaxes both positive and negative superturns and exhibits a strong decatenase activity. Involved in cell-elongation processes. The sequence is that of DNA topoisomerase 6 subunit A from Arabidopsis thaliana (Mouse-ear cress).